Reading from the N-terminus, the 132-residue chain is MDYVITTGKRKTAVARAVVKKGKGIITINGTPAELYPVEVLRNKILEPVKLAEDKAKGIDVTVKVKGGGVTGQADASRTAIARGIVKFLQDNELENLFRQYDRTLIVNDVRIKLPKKPGGRGARAKKQKSYR.

Belongs to the universal ribosomal protein uS9 family.

This is Small ribosomal subunit protein uS9 (rps9) from Thermoplasma volcanium (strain ATCC 51530 / DSM 4299 / JCM 9571 / NBRC 15438 / GSS1).